The sequence spans 156 residues: ATP synthase subunit b (156 aa).

Residues 7-27 (LVAQMVVFFILWWVVAKFIWP) traverse the membrane as a helical segment.

Belongs to the ATPase B chain family. In terms of assembly, F-type ATPases have 2 components, F(1) - the catalytic core - and F(0) - the membrane proton channel. F(1) has five subunits: alpha(3), beta(3), gamma(1), delta(1), epsilon(1). F(0) has three main subunits: a(1), b(2) and c(10-14). The alpha and beta chains form an alternating ring which encloses part of the gamma chain. F(1) is attached to F(0) by a central stalk formed by the gamma and epsilon chains, while a peripheral stalk is formed by the delta and b chains.

It is found in the cell inner membrane. Its function is as follows. F(1)F(0) ATP synthase produces ATP from ADP in the presence of a proton or sodium gradient. F-type ATPases consist of two structural domains, F(1) containing the extramembraneous catalytic core and F(0) containing the membrane proton channel, linked together by a central stalk and a peripheral stalk. During catalysis, ATP synthesis in the catalytic domain of F(1) is coupled via a rotary mechanism of the central stalk subunits to proton translocation. Component of the F(0) channel, it forms part of the peripheral stalk, linking F(1) to F(0). In Ralstonia pickettii (strain 12J), this protein is ATP synthase subunit b.